A 470-amino-acid chain; its full sequence is Uronate isomerase (470 aa).

Belongs to the metallo-dependent hydrolases superfamily. Uronate isomerase family.

It catalyses the reaction D-glucuronate = D-fructuronate. It carries out the reaction aldehydo-D-galacturonate = keto-D-tagaturonate. It participates in carbohydrate metabolism; pentose and glucuronate interconversion. The sequence is that of Uronate isomerase from Cronobacter sakazakii (strain ATCC BAA-894) (Enterobacter sakazakii).